The primary structure comprises 361 residues: Glutamate 5-kinase (361 aa).

Lys7 serves as a coordination point for ATP. Residues Ser47, Asp134, and Asn146 each coordinate substrate. Residues 166-167 (TD) and 209-215 (TGGMTTK) contribute to the ATP site. The PUA domain occupies 274-345 (LGTLQLDEGA…EAIETQMSTN (72 aa)).

It belongs to the glutamate 5-kinase family.

The protein resides in the cytoplasm. It carries out the reaction L-glutamate + ATP = L-glutamyl 5-phosphate + ADP. It functions in the pathway amino-acid biosynthesis; L-proline biosynthesis; L-glutamate 5-semialdehyde from L-glutamate: step 1/2. Functionally, catalyzes the transfer of a phosphate group to glutamate to form L-glutamate 5-phosphate. The polypeptide is Glutamate 5-kinase (Prochlorococcus marinus (strain MIT 9313)).